Consider the following 731-residue polypeptide: Actin filament-associated protein 1 (731 aa).

Residue Met1 is modified to N-acetylmethionine. The segment at 56-90 is disordered; it reads NNLPAPPQMPLPEIPQPWLPPDSGPPPLPTSSLPE. Residues 59–84 are compositionally biased toward pro residues; it reads PAPPQMPLPEIPQPWLPPDSGPPPLP. An SH3-binding motif is present at residues 70–73; sequence PQPW. The SH2-binding 1 signature appears at 93–96; sequence YEEA. A disordered region spans residues 118–139; sequence SSSYESYDEEEEDGKGKKTRHQ. Positions 152–248 constitute a PH 1 domain; sequence DAKICAFLLR…WLKVIKEAYS (97 aa). The interval 252 to 318 is disordered; it reads GPVDPECSPP…SKSEAKGTVS (67 aa). Positions 271–284 are enriched in basic and acidic residues; that stretch reads AELEKKLSSERPSS. Ser283 and Ser284 each carry phosphoserine. The PH 2 domain maps to 348 to 442; that stretch reads DVPTCGYLNV…WIGILLAETG (95 aa). The SH2-binding 2 motif lies at 452–457; sequence YDYIDV. Residues 513-544 are disordered; it reads KNKKPPASSNGVPVKGKAPSSQQKKVETAGGV. Residue Ser549 is modified to Phosphoserine. The stretch at 558 to 649 forms a coiled coil; sequence KNRVEADAKR…VKESLKKALA (92 aa). The segment at 595-638 is interaction with F-actin; sequence DLRAAIEVNAGRKTQAALEDKLKRLEEECKQREAERVSLELELT. The interval 658-731 is disordered; that stretch reads IEPRSGTSSP…AKEWELKNGT (74 aa). 3 positions are modified to phosphoserine: Ser665, Ser666, and Ser669. The residue at position 676 (Thr676) is a Phosphothreonine. A compositionally biased stretch (polar residues) spans 678-687; the sequence is ENSPISSCDT. Residues Ser680 and Ser688 each carry the phosphoserine modification. Residues 721–731 show a composition bias toward basic and acidic residues; that stretch reads KAKEWELKNGT.

Monomer and homomultimer. Interacts via its C-terminus with F-actin; probably involving AFAP1 multimers. Interacts with activated SRC SH3-SH2 domains. Interacts via its PH 1 domain with PRKCA, PRKCB and PRKCI. In terms of processing, phosphorylated on tyrosine residues by SRC.

It is found in the cytoplasm. The protein resides in the cytoskeleton. The protein localises to the stress fiber. Functionally, can cross-link actin filaments into both network and bundle structures. May modulate changes in actin filament integrity and induce lamellipodia formation. May function as an adapter molecule that links other proteins, such as SRC and PKC to the actin cytoskeleton. The chain is Actin filament-associated protein 1 (Afap1) from Mus musculus (Mouse).